The following is a 219-amino-acid chain: Uracil phosphoribosyltransferase 1 (219 aa).

GTP contacts are provided by residues Arg33, Arg42, and Asp76 to Ile79. Arg86 contacts 5-phospho-alpha-D-ribose 1-diphosphate. Arg103 is a binding site for GTP. Arg111 provides a ligand contact to 5-phospho-alpha-D-ribose 1-diphosphate. Arg132 contributes to the GTP binding site. Residues Asp138 and Asp138–Ser146 each bind 5-phospho-alpha-D-ribose 1-diphosphate. Tyr202 lines the D-ribose 5-phosphate pocket. Uracil is bound by residues Ile203 and Gly208–Phe210. Residue Asp209 coordinates 5-phospho-alpha-D-ribose 1-diphosphate.

This sequence belongs to the UPRTase family. Mg(2+) is required as a cofactor.

The enzyme catalyses UMP + diphosphate = 5-phospho-alpha-D-ribose 1-diphosphate + uracil. The protein operates within pyrimidine metabolism; UMP biosynthesis via salvage pathway; UMP from uracil: step 1/1. Allosterically activated by GTP. In terms of biological role, catalyzes the conversion of uracil and 5-phospho-alpha-D-ribose 1-diphosphate (PRPP) to UMP and diphosphate. In Schizosaccharomyces pombe (strain 972 / ATCC 24843) (Fission yeast), this protein is Uracil phosphoribosyltransferase 1.